Reading from the N-terminus, the 296-residue chain is Light-independent protochlorophyllide reductase iron-sulfur ATP-binding protein (296 aa).

ATP is bound by residues 10–15 and Lys-39; that span reads GIGKST. Ser-14 lines the Mg(2+) pocket. Residues Cys-95 and Cys-129 each contribute to the [4Fe-4S] cluster site. 180-181 serves as a coordination point for ATP; sequence NR.

Belongs to the NifH/BchL/ChlL family. As to quaternary structure, homodimer. Protochlorophyllide reductase is composed of three subunits; ChlL, ChlN and ChlB. The cofactor is [4Fe-4S] cluster.

Its subcellular location is the plastid. It is found in the chloroplast. It carries out the reaction chlorophyllide a + oxidized 2[4Fe-4S]-[ferredoxin] + 2 ADP + 2 phosphate = protochlorophyllide a + reduced 2[4Fe-4S]-[ferredoxin] + 2 ATP + 2 H2O. It participates in porphyrin-containing compound metabolism; chlorophyll biosynthesis (light-independent). Functionally, component of the dark-operative protochlorophyllide reductase (DPOR) that uses Mg-ATP and reduced ferredoxin to reduce ring D of protochlorophyllide (Pchlide) to form chlorophyllide a (Chlide). This reaction is light-independent. The L component serves as a unique electron donor to the NB-component of the complex, and binds Mg-ATP. The polypeptide is Light-independent protochlorophyllide reductase iron-sulfur ATP-binding protein (Mesostigma viride (Green alga)).